Consider the following 74-residue polypeptide: Putative protein YozX (74 aa).

The polypeptide is Putative protein YozX (yozX) (Bacillus subtilis (strain 168)).